The chain runs to 99 residues: Nucleoid-associated protein EbfC (99 aa).

The protein belongs to the YbaB/EbfC family. Homodimer.

It localises to the cytoplasm. The protein localises to the nucleoid. Its function is as follows. Binds to DNA and alters its conformation. May be involved in regulation of gene expression, nucleoid organization and DNA protection. In Borreliella burgdorferi (strain ZS7) (Borrelia burgdorferi), this protein is Nucleoid-associated protein EbfC.